Reading from the N-terminus, the 524-residue chain is PiggyBac transposable element-derived protein 5 (524 aa).

A disordered region spans residues aspartate 30–proline 117. Over residues serine 47 to serine 59 the composition is skewed to low complexity. Residues proline 67–alanine 79 show a composition bias toward pro residues. The segment covering leucine 98 to aspartate 108 has biased composition (basic and acidic residues). Serine 521 bears the Phosphoserine mark.

The protein localises to the nucleus. In terms of biological role, transposase that mediates sequence-specific genomic rearrangements. Can induce genomic rearrangements that inactivate the HPRT1 gene. This Homo sapiens (Human) protein is PiggyBac transposable element-derived protein 5 (PGBD5).